A 143-amino-acid chain; its full sequence is Large ribosomal subunit protein uL15 (143 aa).

Residues 1-56 (MELNSIKPAEGSKHAKRRVGRGIGSGLGKTAGRGHKGQKSRSGGYHKVGFEGGQMP) form a disordered region. Residues 21–31 (RGIGSGLGKTA) are compositionally biased toward gly residues.

This sequence belongs to the universal ribosomal protein uL15 family. In terms of assembly, part of the 50S ribosomal subunit.

Functionally, binds to the 23S rRNA. The chain is Large ribosomal subunit protein uL15 from Delftia acidovorans (strain DSM 14801 / SPH-1).